A 386-amino-acid chain; its full sequence is Cytochrome b (386 aa).

Transmembrane regions (helical) follow at residues 32–52 (TGSL…FTAM), 76–98 (YLIR…GHIG), 113–133 (VWVI…TGYC), and 179–199 (FFAL…MHLM). Heme b contacts are provided by His82 and His96. Positions 183 and 197 each coordinate heme b. His202 contributes to the a ubiquinone binding site. 4 consecutive transmembrane segments (helical) span residues 225-245 (FVFK…TFVF), 289-309 (LGGV…PVTD), 321-341 (FSKT…QLGQ), and 348-368 (FIEM…VLVP).

The protein belongs to the cytochrome b family. As to quaternary structure, fungal cytochrome b-c1 complex contains 10 subunits; 3 respiratory subunits, 2 core proteins and 5 low-molecular weight proteins. Cytochrome b-c1 complex is a homodimer. Heme b serves as cofactor.

Its subcellular location is the mitochondrion inner membrane. Component of the ubiquinol-cytochrome c reductase complex (complex III or cytochrome b-c1 complex) that is part of the mitochondrial respiratory chain. The b-c1 complex mediates electron transfer from ubiquinol to cytochrome c. Contributes to the generation of a proton gradient across the mitochondrial membrane that is then used for ATP synthesis. This is Cytochrome b (COB) from Wickerhamomyces pijperi (Yeast).